We begin with the raw amino-acid sequence, 61 residues long: LECHNQQSSQTPTTQTCPGETNCYKKQWSDHRGSRTERGCGCPTVKPGIKLKCCTTDRCNK.

Intrachain disulfides connect Cys3–Cys23, Cys17–Cys40, Cys42–Cys53, and Cys54–Cys59.

This sequence belongs to the three-finger toxin family. Short-chain subfamily. Type I alpha-neurotoxin sub-subfamily. Expressed by the venom gland.

The protein localises to the secreted. In terms of biological role, binds to muscle nicotinic acetylcholine receptor (nAChR) and inhibit acetylcholine from binding to the receptor, thereby impairing neuromuscular transmission. The chain is Short neurotoxin 2 from Hemachatus haemachatus (Rinkhals).